The following is an 88-amino-acid chain: Mitochondrial import inner membrane translocase subunit TIM9 (88 aa).

The short motif at 35–59 is the Twin CX3C motif element; the sequence is CFDDCVNDFTSNNLTTKETGCITKC. 2 disulfides stabilise this stretch: C35–C59 and C39–C55.

The protein belongs to the small Tim family. As to quaternary structure, heterohexamer; composed of 3 copies of TIM9 and 3 copies of TIM10, named soluble 70 kDa complex. Associates with the TIM22 complex, whose core is composed of TIM22 and TIM54. Interacts with the transmembrane regions of multi-pass transmembrane proteins in transit.

The protein localises to the mitochondrion inner membrane. In terms of biological role, mitochondrial intermembrane chaperone that participates in the import and insertion of multi-pass transmembrane proteins into the mitochondrial inner membrane. Also required for the transfer of beta-barrel precursors from the TOM complex to the sorting and assembly machinery (SAM complex) of the outer membrane. Acts as a chaperone-like protein that protects the hydrophobic precursors from aggregation and guide them through the mitochondrial intermembrane space. The protein is Mitochondrial import inner membrane translocase subunit TIM9 (TIM9) of Debaryomyces hansenii (strain ATCC 36239 / CBS 767 / BCRC 21394 / JCM 1990 / NBRC 0083 / IGC 2968) (Yeast).